Consider the following 320-residue polypeptide: Cytochrome f (320 aa).

The signal sequence occupies residues 1-35 (MQNRNTFLGVKEQITRSIFVSIMIYVITRASISNA). Residues tyrosine 36, cysteine 56, cysteine 59, and histidine 60 each contribute to the heme site. A helical transmembrane segment spans residues 286-306 (IQGLLFFLASVILAQIFLVLK).

It belongs to the cytochrome f family. The 4 large subunits of the cytochrome b6-f complex are cytochrome b6, subunit IV (17 kDa polypeptide, petD), cytochrome f and the Rieske protein, while the 4 small subunits are PetG, PetL, PetM and PetN. The complex functions as a dimer. It depends on heme as a cofactor.

Its subcellular location is the plastid. The protein resides in the chloroplast thylakoid membrane. Its function is as follows. Component of the cytochrome b6-f complex, which mediates electron transfer between photosystem II (PSII) and photosystem I (PSI), cyclic electron flow around PSI, and state transitions. This Dioscorea elephantipes (Elephant's foot yam) protein is Cytochrome f.